A 499-amino-acid polypeptide reads, in one-letter code: Glycerol kinase (499 aa).

Residue T13 coordinates ADP. The ATP site is built by T13, T14, and S15. T13 provides a ligand contact to sn-glycerol 3-phosphate. R17 is a binding site for ADP. Residues R83, E84, Y136, and D246 each contribute to the sn-glycerol 3-phosphate site. Glycerol is bound by residues R83, E84, Y136, D246, and Q247. ADP contacts are provided by T268 and G311. 4 residues coordinate ATP: T268, G311, Q315, and G412. ADP is bound by residues G412 and N416.

It belongs to the FGGY kinase family.

The enzyme catalyses glycerol + ATP = sn-glycerol 3-phosphate + ADP + H(+). Its pathway is polyol metabolism; glycerol degradation via glycerol kinase pathway; sn-glycerol 3-phosphate from glycerol: step 1/1. With respect to regulation, inhibited by fructose 1,6-bisphosphate (FBP). Functionally, key enzyme in the regulation of glycerol uptake and metabolism. Catalyzes the phosphorylation of glycerol to yield sn-glycerol 3-phosphate. The chain is Glycerol kinase from Francisella philomiragia subsp. philomiragia (strain ATCC 25017 / CCUG 19701 / FSC 153 / O#319-036).